A 451-amino-acid chain; its full sequence is mRNA cleavage and polyadenylation factor CLP1 (451 aa).

Residues Lys-75 and Asn-136 to Ala-141 each bind ATP.

This sequence belongs to the Clp1 family. Clp1 subfamily. Component of a pre-mRNA cleavage factor complex. Interacts directly with PCF11.

It is found in the nucleus. Its function is as follows. Required for endonucleolytic cleavage during polyadenylation-dependent pre-mRNA 3'-end formation. This is mRNA cleavage and polyadenylation factor CLP1 from Candida glabrata (strain ATCC 2001 / BCRC 20586 / JCM 3761 / NBRC 0622 / NRRL Y-65 / CBS 138) (Yeast).